The primary structure comprises 218 residues: Large ribosomal subunit protein bL25 (218 aa).

This sequence belongs to the bacterial ribosomal protein bL25 family. CTC subfamily. As to quaternary structure, part of the 50S ribosomal subunit; part of the 5S rRNA/L5/L18/L25 subcomplex. Contacts the 5S rRNA. Binds to the 5S rRNA independently of L5 and L18.

Its function is as follows. This is one of the proteins that binds to the 5S RNA in the ribosome where it forms part of the central protuberance. The sequence is that of Large ribosomal subunit protein bL25 from Gluconobacter oxydans (strain 621H) (Gluconobacter suboxydans).